Here is a 66-residue protein sequence, read N- to C-terminus: MDFTTLIIIGVYLLVFIVYFAKINTSVCTISISGASIEISGCDNPTLFEILPKLRPFNHGLSLPSN.

Residues 1–2 (MD) lie on the Lumenal side of the membrane. A helical transmembrane segment spans residues 3–23 (FTTLIIIGVYLLVFIVYFAKI). Topologically, residues 24–66 (NTSVCTISISGASIEISGCDNPTLFEILPKLRPFNHGLSLPSN) are cytoplasmic.

Belongs to the Tymovirales TGBp3 protein family.

The protein localises to the host endoplasmic reticulum membrane. Functionally, plays a role in viral cell-to-cell propagation, by facilitating genome transport to neighboring plant cells through plasmosdesmata. May induce the formation of granular vesicles derived from the Endoplasmic reticulum, which align on actin filaments. The protein is Movement protein TGBp3 of Trifolium (WCMV).